A 20-amino-acid chain; its full sequence is Trypsin inhibitor DE-3 (20 aa).

Belongs to the protease inhibitor I3 (leguminous Kunitz-type inhibitor) family.

Its function is as follows. Inhibition of trypsin. The polypeptide is Trypsin inhibitor DE-3 (Erythrina corallodendron (Coral tree)).